The following is a 203-amino-acid chain: Histidine biosynthesis bifunctional protein HisIE (203 aa).

A phosphoribosyl-AMP cyclohydrolase region spans residues 1–114 (MLTEQQRREL…FGDASHQWLF (114 aa)). A phosphoribosyl-ATP pyrophosphohydrolase region spans residues 115–203 (LYQLEQLLAE…VIDNLRKRHQ (89 aa)).

It in the N-terminal section; belongs to the PRA-CH family. In the C-terminal section; belongs to the PRA-PH family.

It is found in the cytoplasm. The enzyme catalyses 1-(5-phospho-beta-D-ribosyl)-ATP + H2O = 1-(5-phospho-beta-D-ribosyl)-5'-AMP + diphosphate + H(+). The catalysed reaction is 1-(5-phospho-beta-D-ribosyl)-5'-AMP + H2O = 1-(5-phospho-beta-D-ribosyl)-5-[(5-phospho-beta-D-ribosylamino)methylideneamino]imidazole-4-carboxamide. Its pathway is amino-acid biosynthesis; L-histidine biosynthesis; L-histidine from 5-phospho-alpha-D-ribose 1-diphosphate: step 2/9. The protein operates within amino-acid biosynthesis; L-histidine biosynthesis; L-histidine from 5-phospho-alpha-D-ribose 1-diphosphate: step 3/9. In Salmonella typhimurium (strain LT2 / SGSC1412 / ATCC 700720), this protein is Histidine biosynthesis bifunctional protein HisIE (hisI).